The primary structure comprises 164 residues: Single-stranded DNA-binding protein 2 (164 aa).

One can recognise an SSB domain in the interval 5 to 109 (INKVILVGNL…IVADEMQMLG (105 aa)). Positions 105–164 (MQMLGGRSDGGGMGGGGERPQRQTSQRQDYAPRRQARQPSQSPQSSPPPMDDFADDDIPF) are disordered. Over residues 111-122 (RSDGGGMGGGGE) the composition is skewed to gly residues. The Important for interaction with partner proteins signature appears at 159-164 (DDDIPF).

Homotetramer.

Plays an important role in DNA replication, recombination and repair. Binds to ssDNA and to an array of partner proteins to recruit them to their sites of action during DNA metabolism. The protein is Single-stranded DNA-binding protein 2 (ssb2) of Xylella fastidiosa (strain 9a5c).